A 224-amino-acid chain; its full sequence is Protein GrpE (224 aa).

Composition is skewed to polar residues over residues 1–16 and 209–224; these read MSGD…NVES and ESSS…EGDA. Disordered regions lie at residues 1–35 and 203–224; these read MSGD…DPVV and SMGP…EGDA.

This sequence belongs to the GrpE family. As to quaternary structure, homodimer.

The protein localises to the cytoplasm. In terms of biological role, participates actively in the response to hyperosmotic and heat shock by preventing the aggregation of stress-denatured proteins, in association with DnaK and GrpE. It is the nucleotide exchange factor for DnaK and may function as a thermosensor. Unfolded proteins bind initially to DnaJ; upon interaction with the DnaJ-bound protein, DnaK hydrolyzes its bound ATP, resulting in the formation of a stable complex. GrpE releases ADP from DnaK; ATP binding to DnaK triggers the release of the substrate protein, thus completing the reaction cycle. Several rounds of ATP-dependent interactions between DnaJ, DnaK and GrpE are required for fully efficient folding. In Synechococcus sp. (strain CC9902), this protein is Protein GrpE.